Consider the following 521-residue polypeptide: Importin subunit alpha-3 (521 aa).

At Ala-2 the chain carries N-acetylalanine. The 57-residue stretch at 2–58 (ADNEKLDNQRLKNFKNKGRDLETMRRQRNEVVVELRKNKRDEHLLKRRNVPQEDICE) folds into the IBB domain. A Nuclear localization signal motif is present at residues 43–52 (EHLLKRRNVP). A Phosphoserine modification is found at Ser-60. An ARM 1; truncated repeat occupies 66-106 (YRVQNTSLEAIVQNASSDNQGIQLSAVQAARKLLSSDRNPP). ARM repeat units lie at residues 107–149 (IDDL…TSEQ), 150–194 (TQAV…CRDY), 195–233 (VISL…HKDP), 234–278 (PPPM…EQIQ), 279–318 (MVID…TDEQ), 319–360 (TQVV…NQQQ), 361–400 (VQAV…ISGR), and 401–443 (KDQV…KMAE). The segment at 137 to 229 (WALTNIASGT…VTWVMVNLCR (93 aa)) is NLS binding site (major). Positions 306-394 (RAVGNIVTGT…QKEAAWAISN (89 aa)) are NLS binding site (minor). An ARM 10; atypical repeat occupies 447–485 (ETIANLIEECGGLEKIEQLQNHENEDIYKLAYEIIDQFF).

This sequence belongs to the importin alpha family. As to quaternary structure, forms a complex with importin subunit beta-1 (KPNB1). Interacts with SNAI1. Interacts with TALDO1 isoform 1. Interacts with CYB1. As to expression, detected more or less in all tissues examined (Ehrlich ascites tumor cells, testis, kidney, spleen, liver, heart, lung, thymus, skeletal muscle, cerebellum and brain (without cerebellum)). Multiple-sized transcripts were highly expressed, especially in testis.

It localises to the cytoplasm. Its subcellular location is the nucleus. Functionally, functions in nuclear protein import as an adapter protein for nuclear receptor KPNB1. Binds specifically and directly to substrates containing either a simple or bipartite NLS motif. Docking of the importin/substrate complex to the nuclear pore complex (NPC) is mediated by KPNB1 through binding to nucleoporin FxFG repeats and the complex is subsequently translocated through the pore by an energy requiring, Ran-dependent mechanism. At the nucleoplasmic side of the NPC, Ran binds to importin-beta and the three components separate and importin-alpha and -beta are re-exported from the nucleus to the cytoplasm where GTP hydrolysis releases Ran from importin. The directionality of nuclear import is thought to be conferred by an asymmetric distribution of the GTP- and GDP-bound forms of Ran between the cytoplasm and nucleus. Mediates nuclear import of AARS1, MRTFA and RANBP3. The protein is Importin subunit alpha-3 (Kpna4) of Mus musculus (Mouse).